The primary structure comprises 357 residues: DNA replication and repair protein RecF (357 aa).

ATP is bound at residue 30 to 37 (GANGSGKT).

It belongs to the RecF family.

Its subcellular location is the cytoplasm. The RecF protein is involved in DNA metabolism; it is required for DNA replication and normal SOS inducibility. RecF binds preferentially to single-stranded, linear DNA. It also seems to bind ATP. The chain is DNA replication and repair protein RecF from Salmonella paratyphi A (strain ATCC 9150 / SARB42).